The primary structure comprises 505 residues: ATP synthase subunit alpha (505 aa).

170-177 (GDRQTGKT) contacts ATP.

Belongs to the ATPase alpha/beta chains family. In terms of assembly, F-type ATPases have 2 components, CF(1) - the catalytic core - and CF(0) - the membrane proton channel. CF(1) has five subunits: alpha(3), beta(3), gamma(1), delta(1), epsilon(1). CF(0) has four main subunits: a(1), b(1), b'(1) and c(9-12).

It is found in the cellular thylakoid membrane. It carries out the reaction ATP + H2O + 4 H(+)(in) = ADP + phosphate + 5 H(+)(out). Functionally, produces ATP from ADP in the presence of a proton gradient across the membrane. The alpha chain is a regulatory subunit. This Synechococcus sp. (strain ATCC 27144 / PCC 6301 / SAUG 1402/1) (Anacystis nidulans) protein is ATP synthase subunit alpha.